We begin with the raw amino-acid sequence, 138 residues long: Acidic phospholipase A2 DsM-a2/DsM-a2' (138 aa).

Positions M1–G16 are cleaved as a signal peptide. 7 cysteine pairs are disulfide-bonded: C42/C131, C44/C60, C59/C111, C65/C138, C66/C104, C73/C97, and C91/C102. Ca(2+) is bound by residues Y43, G45, and G47. Residue H63 is part of the active site. D64 provides a ligand contact to Ca(2+). The active site involves D105.

Belongs to the phospholipase A2 family. Group II subfamily. D49 sub-subfamily. Ca(2+) is required as a cofactor. Expressed by the venom gland.

It is found in the secreted. The enzyme catalyses a 1,2-diacyl-sn-glycero-3-phosphocholine + H2O = a 1-acyl-sn-glycero-3-phosphocholine + a fatty acid + H(+). Exhibits high hydrolytic activities and shows strong preference for the anionic micelles (dPPC with deoxycholate) to the zwitterionic micelles (dPPC with Triton X-100). PLA2 catalyzes the calcium-dependent hydrolysis of the 2-acyl groups in 3-sn-phosphoglycerides. The polypeptide is Acidic phospholipase A2 DsM-a2/DsM-a2' (Daboia siamensis (Eastern Russel's viper)).